The chain runs to 1234 residues: Formin-like protein 3 (1234 aa).

Residues 1–208 (MRLDSFPASI…QYVARRNISP (208 aa)) form the Phosphatase tensin-type domain. Cysteine 141 acts as the Phosphocysteine intermediate in catalysis. Residues 214-352 (ERALSFDCLI…FRAEMLFCEL (139 aa)) form the C2 tensin-type domain. Disordered regions lie at residues 443–478 (DSDE…NINH) and 492–840 (LVNT…LKPL). The span at 498-507 (VLPPTTPPPC) shows a compositional bias: pro residues. Residues 524 to 534 (VQHESPSDRKL) show a composition bias toward basic and acidic residues. 7 stretches are compositionally biased toward pro residues: residues 536–576 (SPSP…PPLP), 584–656 (QPPP…PPAP), 663–673 (PAPPPPPPPPR), 688–699 (GPPPPPPPPLPP), 709–721 (PSAP…PPPA), 729–739 (APAPPLPPPLP), and 762–784 (PAPP…PPPL). One can recognise an FH2 domain in the interval 827–1226 (QQSNPPKKAS…KLEKDKEKAT (400 aa)).

The protein belongs to the formin-like family. Class-II subfamily.

The protein is Formin-like protein 3 (FH3) of Oryza sativa subsp. japonica (Rice).